Here is a 341-residue protein sequence, read N- to C-terminus: Tetraacyldisaccharide 4'-kinase (341 aa).

54 to 61 is a binding site for ATP; sequence TVGGAGKT.

This sequence belongs to the LpxK family.

The enzyme catalyses a lipid A disaccharide + ATP = a lipid IVA + ADP + H(+). The protein operates within glycolipid biosynthesis; lipid IV(A) biosynthesis; lipid IV(A) from (3R)-3-hydroxytetradecanoyl-[acyl-carrier-protein] and UDP-N-acetyl-alpha-D-glucosamine: step 6/6. Transfers the gamma-phosphate of ATP to the 4'-position of a tetraacyldisaccharide 1-phosphate intermediate (termed DS-1-P) to form tetraacyldisaccharide 1,4'-bis-phosphate (lipid IVA). The polypeptide is Tetraacyldisaccharide 4'-kinase (Brucella ovis (strain ATCC 25840 / 63/290 / NCTC 10512)).